The following is a 296-amino-acid chain: SPbeta prophage-derived endonuclease YokF (296 aa).

Positions 1–19 (MKKVLLGFAAFTLSLSLAA) are cleaved as a signal peptide. Residue Cys-20 is the site of N-palmitoyl cysteine attachment. Residue Cys-20 is the site of S-diacylglycerol cysteine attachment. Positions 20–65 (CSSNDSEKVSTEKETPQASTDVEKKTEQKESTKEKTADKSKEKDKK) are disordered. A compositionally biased stretch (basic and acidic residues) spans 24-65 (DSEKVSTEKETPQASTDVEKKTEQKESTKEKTADKSKEKDKK). Residues 66 to 199 (ELVDVTLDRA…KSEKLSIWSK (134 aa)) enclose the TNase-like domain. Residue Asp-79 coordinates Ca(2+). Arg-93 is a catalytic residue. Ca(2+) is bound by residues Asp-98 and Thr-99. Catalysis depends on residues Glu-101 and Arg-144. The interval 218 to 296 (AVKKATTSKP…RDHDNYACER (79 aa)) is disordered. Over residues 219-244 (VKKATTSKPAATQPTTPKASSETSTT) the composition is skewed to low complexity. A compositionally biased stretch (basic and acidic residues) spans 284–296 (KMDRDHDNYACER).

It depends on Ca(2+) as a cofactor. The cofactor is Cu(2+). Mn(2+) is required as a cofactor.

The protein resides in the cell membrane. Inhibited by aurintricalboxylic acid but not by Zn(2+), Mn(2+), Hg(2+), 2-mercaptoethanol and sodium citrate. Neither inhibited nor activated by ATP. Catalyzes the hydrolysis of supercoiled double and single strand DNA and RNA. Involved in chromosomal DNA degradation and cell death caused by thermal stress. The sequence is that of SPbeta prophage-derived endonuclease YokF (yokF) from Bacillus subtilis (strain 168).